The sequence spans 130 residues: Small ribosomal subunit protein uS9 (130 aa).

This sequence belongs to the universal ribosomal protein uS9 family.

The polypeptide is Small ribosomal subunit protein uS9 (Aster yellows witches'-broom phytoplasma (strain AYWB)).